The chain runs to 472 residues: Excisase A (472 aa).

Residues 244 to 429 (EILSGITKFE…FSLDMRKLAI (186 aa)) enclose the Tyr recombinase domain. Residues Arg287, Lys317, Arg384, and His407 contribute to the active site. The O-(3'-phospho-DNA)-tyrosine intermediate role is filled by Tyr416.

The protein belongs to the XisA/XisC recombinase family.

Essential for DNA excision. Site specific recombinase necessary for the excision of the 11 kb nifD element during heterocyst differentiation. This chain is Excisase A (xisA), found in Nostoc sp. (strain PCC 7120 / SAG 25.82 / UTEX 2576).